Consider the following 488-residue polypeptide: Prostaglandin E2 receptor EP4 subtype (488 aa).

The Extracellular segment spans residues Met-1–Asn-19. Asn-7 is a glycosylation site (N-linked (GlcNAc...) asparagine). A helical transmembrane segment spans residues Pro-20–Cys-43. Over Lys-44–Tyr-55 the chain is Cytoplasmic. A helical transmembrane segment spans residues Thr-56 to Thr-79. Topologically, residues Tyr-80–Thr-96 are extracellular. Cys-92 and Cys-170 are joined by a disulfide. The helical transmembrane segment at Phe-97 to Ile-115 threads the bilayer. At Glu-116–Leu-135 the chain is on the cytoplasmic side. Residues Ala-136–Arg-160 form a helical membrane-spanning segment. Topologically, residues Ser-161–Phe-184 are extracellular. N-linked (GlcNAc...) asparagine glycosylation is present at Asn-177. A helical membrane pass occupies residues Ser-185–Leu-211. At Arg-212–Glu-270 the chain is on the cytoplasmic side. Residues Ile-271–Asn-298 form a helical membrane-spanning segment. Residues Gln-299–Leu-315 lie on the Extracellular side of the membrane. A helical membrane pass occupies residues Gln-316 to Leu-335. Residues Arg-336 to Ile-488 lie on the Cytoplasmic side of the membrane. A compositionally biased stretch (basic and acidic residues) spans Arg-358–Arg-371. Residues Arg-358–Arg-381 form a disordered region. The segment covering Thr-372–Arg-381 has biased composition (polar residues). 4 positions are modified to phosphoserine: Ser-377, Ser-380, Ser-382, and Ser-385. The segment at Glu-456–Thr-475 is disordered.

It belongs to the G-protein coupled receptor 1 family. As to quaternary structure, interacts with FEM1A. Post-translationally, phosphorylation mediates agonist-mediated desensitization by promoting cytoplasmic retention. In terms of tissue distribution, highly expressed in intestine, duodenal epithelium, uterus, thymus and adrenal cortex. Lower but significant expression in whole adrenal, lung, spleen, stomach, and kidney. In this latter organ, the receptor is localized in the glomeruli and the transitional epithelium of the renal calyx.

It is found in the cell membrane. Functionally, receptor for prostaglandin E2 (PGE2). The activity of this receptor is mediated by G(s) proteins that stimulate adenylate cyclase. Has a relaxing effect on smooth muscle. May play an important role in regulating renal hemodynamics, intestinal epithelial transport, adrenal aldosterone secretion, and uterine function. The protein is Prostaglandin E2 receptor EP4 subtype (PTGER4) of Oryctolagus cuniculus (Rabbit).